Here is a 146-residue protein sequence, read N- to C-terminus: Angiogenin (146 aa).

An N-terminal signal peptide occupies residues 1-24 (MVMGPHLLLLVFILGLGLTPPTLA). Glutamine 25 carries the pyrrolidone carboxylic acid modification. Residue histidine 37 is the Proton acceptor of the active site. Cystine bridges form between cysteine 50–cysteine 105, cysteine 63–cysteine 116, and cysteine 81–cysteine 131. The Nucleolar localization signal signature appears at 55-59 (RLRNM). Cysteine 105 and isoleucine 127 together coordinate tRNA. Histidine 138 acts as the Proton donor in catalysis.

It belongs to the pancreatic ribonuclease family. In terms of assembly, homodimer. Interacts with RNH1; inhibiting ANG ribonuclease activity. Interacts with PCNA.

The protein localises to the secreted. It localises to the nucleus. Its subcellular location is the nucleolus. It is found in the cytoplasm. The protein resides in the stress granule. Has weak tRNA ribonuclease activity by itself due to partial autoinhibition by its C-terminus, which folds into a short alpha-helix that partially occludes the substrate-binding site. In absence of stress, the ribonuclease activity is inhibited by RNH1 in the cytoplasm. In response to stress, dissociates from RNH1 in the cytoplasm and associates with cytoplasmic ribosomes with vacant A-sites: ribosomes directly activate the tRNA ribonuclease activity of ANG by refolding the C-terminal alpha-helix. In response to stress, the angiogenic activity of ANG is inhibited by RNH1 in the nucleus. Functionally, secreted ribonuclease that can either promote or restrict cell proliferation of target cells, depending on the context. Endocytosed in target cells via its receptor PLXNB2 and translocates to the cytoplasm or nucleus. Under stress conditions, localizes to the cytoplasm and promotes the assembly of stress granules (SGs): specifically cleaves a subset of tRNAs within anticodon loops to produce tRNA-derived stress-induced fragments (tiRNAs), resulting in translation repression and inhibition of cell proliferation. tiRNas also prevent formation of apoptosome, thereby promoting cell survival. Preferentially cleaves RNAs between a pyrimidine and an adenosine residue, suggesting that it cleaves the anticodon loop of tRNA(Ala) (32-UUAGCAU-38) after positions 33 and 36. Cleaves a subset of tRNAs, including tRNA(Ala), tRNA(Glu), tRNA(Gly), tRNA(Lys), tRNA(Val), tRNA(His), tRNA(Asp) and tRNA(Sec). Under growth conditions and in differentiated cells, translocates to the nucleus and stimulates ribosomal RNA (rRNA) transcription, including that containing the initiation site sequences of 45S rRNA, thereby promoting cell growth and proliferation. Angiogenin induces vascularization of normal and malignant tissues via its ability to promote rRNA transcription. Involved in hematopoietic stem and progenitor cell (HSPC) growth and survival by promoting rRNA transcription in growth conditions and inhibiting translation in response to stress, respectively. Mediates the crosstalk between myeloid and intestinal epithelial cells to protect the intestinal epithelial barrier integrity: secreted by myeloid cells and promotes intestinal epithelial cells proliferation and survival. Also mediates osteoclast-endothelial cell crosstalk in growing bone: produced by osteoclasts and protects the neighboring vascular cells against senescence by promoting rRNA transcription. This Saimiri sciureus (Common squirrel monkey) protein is Angiogenin (ANG).